The chain runs to 347 residues: Microfibril-associated glycoprotein 3 (347 aa).

Residues 1–22 (MKLHYCLCILLVVTFVPTALVL) form the signal peptide. The Extracellular segment spans residues 23 to 139 (EDVTPLGTNQ…TLRVIFTSGD (117 aa)). N-linked (GlcNAc...) asparagine glycosylation is found at asparagine 31, asparagine 36, asparagine 63, and asparagine 103. The Ig-like C2-type domain maps to 47–130 (AGSYSGDDVI…SPTRASYSVT (84 aa)). Cysteine 68 and cysteine 117 form a disulfide bridge. A helical transmembrane segment spans residues 140-160 (MSVYYMVVCLIAFTITLILNV). The Cytoplasmic portion of the chain corresponds to 161-347 (TRLCLMSTHL…SAEGSTHHRE (187 aa)). The disordered stretch occupies residues 280–347 (NPELGRSNSP…SAEGSTHHRE (68 aa)). Over residues 311 to 331 (VHLQSETKSIGTDSQDSSHFS) the composition is skewed to polar residues.

Post-translationally, glycosylated.

Its subcellular location is the cell membrane. Its function is as follows. Component of the elastin-associated microfibrils. This is Microfibril-associated glycoprotein 3 (Mfap3) from Rattus norvegicus (Rat).